Consider the following 468-residue polypeptide: Gasdermin-C (468 aa).

The tract at residues 1–230 (MSYTFDWLSK…CVILTSANTK (230 aa)) is triggers pyroptosis.

This sequence belongs to the gasdermin family. In terms of assembly, homooligomer; homooligomeric ring-shaped pore complex containing 27-28 subunits when inserted in the membrane. Cleavage by CASP8 relieves autoinhibition by releasing the N-terminal moiety (Gasdermin-C, N-terminal) that initiates pyroptosis. In terms of processing, palmitoylated.

It is found in the cytoplasm. The protein localises to the cytosol. Its subcellular location is the cell membrane. Its activity is regulated as follows. The full-length protein before cleavage is inactive: intramolecular interactions between N- and C-terminal domains mediate autoinhibition in the absence of activation signal. The intrinsic pyroptosis-inducing activity is carried by the released N-terminal moiety (Gasdermin-C, N-terminal) following cleavage by caspase CASP8. Functionally, this form constitutes the precursor of the pore-forming protein: upon cleavage, the released N-terminal moiety (Gasdermin-C, N-terminal) binds to membranes and forms pores, triggering pyroptosis. Its function is as follows. Pore-forming protein that causes membrane permeabilization and pyroptosis. Produced by the cleavage of gasdermin-C by caspase CASP8 in response to death signals. After cleavage, moves to the plasma membrane where it strongly binds to membrane inner leaflet lipids. Homooligomerizes within the membrane and forms pores of 10-15 nanometers (nm) of inner diameter, triggering pyroptosis. The polypeptide is Gasdermin-C (Mus musculus (Mouse)).